The chain runs to 116 residues: uncharacterized protein (116 aa).

Disordered stretches follow at residues 1 to 26 (MLLTPAKTTRTEDSANSTDDSSKSSN) and 74 to 116 (ENDL…KSSI). The span at 14–26 (SANSTDDSSKSSN) shows a compositional bias: low complexity. Basic and acidic residues predominate over residues 74–86 (ENDLKRSKSQGRE). Over residues 104 to 116 (NTASEIQRTKSSI) the composition is skewed to polar residues.

This is an uncharacterized protein from Saccharomyces cerevisiae (strain ATCC 204508 / S288c) (Baker's yeast).